Consider the following 152-residue polypeptide: MDHILALVLALLPLSLCVALPGALDAMDVEKMKSKVTWKAQGLVARIDKHFPDRGLRFDTDKVEGSTSVVASLESYNNLISDRFGGVSQIKTEISSLAGYLNHWREGNCQEQQPKVWPRRNIFNHTVSLEALMRVREFLKLLQKNVDLLERC.

The first 26 residues, 1–26, serve as a signal peptide directing secretion; the sequence is MDHILALVLALLPLSLCVALPGALDA. Cysteines 109 and 152 form a disulfide.

It belongs to the leptin family. As to expression, expressed mostly in the liver.

It is found in the secreted. May function as part of a signaling pathway that acts to regulate the size of the body fat depot. The protein is Leptin (lep) of Takifugu rubripes (Japanese pufferfish).